The chain runs to 508 residues: Cobalamin biosynthesis protein CobIJ (508 aa).

Residues 1–243 are precorrin-2 C20-methyltransferase; that stretch reads MSARGTLWGV…AMLPGGRRRA (243 aa). The segment at 244–508 is precorrin-3 methylase; that stretch reads LLTGTVAVVG…TATKSSRHSD (265 aa). The disordered stretch occupies residues 489–508; it reads PRRYPEAGRATATKSSRHSD.

It belongs to the precorrin methyltransferase family.

The catalysed reaction is precorrin-2 + S-adenosyl-L-methionine = precorrin-3A + S-adenosyl-L-homocysteine + H(+). The enzyme catalyses precorrin-3B + S-adenosyl-L-methionine = precorrin-4 + S-adenosyl-L-homocysteine + 3 H(+). Its pathway is cofactor biosynthesis; adenosylcobalamin biosynthesis; cob(II)yrinate a,c-diamide from precorrin-2 (aerobic route): step 1/10. It functions in the pathway cofactor biosynthesis; adenosylcobalamin biosynthesis; cob(II)yrinate a,c-diamide from precorrin-2 (aerobic route): step 3/10. In terms of biological role, methylates precorrin-2 at the C-20 position to produce precorrin-3A. In Mycobacterium bovis (strain ATCC BAA-935 / AF2122/97), this protein is Cobalamin biosynthesis protein CobIJ (cobIJ).